The following is a 723-amino-acid chain: Catalase-peroxidase (723 aa).

Positions 96 to 224 form a cross-link, tryptophyl-tyrosyl-methioninium (Trp-Tyr) (with M-250); it reads WHAAGSYRVA…LAAVMMGLIY (129 aa). His-97 functions as the Proton acceptor in the catalytic mechanism. The tryptophyl-tyrosyl-methioninium (Tyr-Met) (with W-96) cross-link spans 224–250; sequence YVNPEGVDGQPDPLKTAQDVRVTFARM. His-265 lines the heme b pocket.

The protein belongs to the peroxidase family. Peroxidase/catalase subfamily. Homodimer or homotetramer. Requires heme b as cofactor. In terms of processing, formation of the three residue Trp-Tyr-Met cross-link is important for the catalase, but not the peroxidase activity of the enzyme.

It carries out the reaction H2O2 + AH2 = A + 2 H2O. The catalysed reaction is 2 H2O2 = O2 + 2 H2O. Functionally, bifunctional enzyme with both catalase and broad-spectrum peroxidase activity. This is Catalase-peroxidase from Leptothrix cholodnii (strain ATCC 51168 / LMG 8142 / SP-6) (Leptothrix discophora (strain SP-6)).